Consider the following 494-residue polypeptide: BTB/POZ domain and ankyrin repeat-containing protein NH5.1 (494 aa).

In terms of domain architecture, BTB spans 25 to 130 (SDVAFSVEGR…LYSGQASVAA (106 aa)). The interval 60–94 (NHQPPPPPPPLNWPMAGGGGGGSGGGGRGGAGGGG) is disordered. Over residues 61–71 (HQPPPPPPPLN) the composition is skewed to pro residues. Residues 75-94 (AGGGGGGSGGGGRGGAGGGG) are compositionally biased toward gly residues. The segment at 136 to 150 (LPGCGARGCWHTRCG) adopts a C2HC NPR-type zinc-finger fold. Zn(2+)-binding residues include cysteine 139, cysteine 144, histidine 146, and cysteine 149. 4 ANK repeats span residues 274–302 (NKIRRMRRALDAADIELVKLMVMGEGLDL), 303–333 (DDALAVHYAVQHCNRDVVKALLELGAADVNS), 338–367 (TGKTALHLAAEMVSPDMVSVLLDHHADPNS), and 371–405 (DGVTPLDVLRSLTSEFLFKGAVPGLTHIEPNKLRL). Disordered regions lie at residues 421-443 (DGAPVTGGAEAGGSDGGNFPRSD) and 469-494 (AAGEGRKSNNGRGSPPPAMYFPNGFA).

This sequence belongs to the plant 'ANKYRIN-BTB/POZ' family. 'NOOT-BOP-COCH-like' (NBCL) subfamily. In terms of assembly, homodimer. Interacts with TGAL5, TGAL7, TGAL8 and TGAL9.

It is found in the nucleus. The protein localises to the cytoplasm. It participates in protein modification; protein ubiquitination. In terms of biological role, may act as a substrate-specific adapter of an E3 ubiquitin-protein ligase complex (CUL3-RBX1-BTB) which mediates the ubiquitination and subsequent proteasomal degradation of target proteins. Transcriptional co-regulator involved in the promotion of leaf and floral meristem fate and determinacy. Required for the abscission of senescent organs, probably by regulating the cell wall disorganization in abscission zones (AZs, e.g. pulvini at the base of leaves). This chain is BTB/POZ domain and ankyrin repeat-containing protein NH5.1, found in Oryza sativa subsp. japonica (Rice).